We begin with the raw amino-acid sequence, 131 residues long: Translation initiation factor 5A (131 aa).

K36 carries the hypusine modification.

It belongs to the eIF-5A family.

The protein resides in the cytoplasm. Functions by promoting the formation of the first peptide bond. The protein is Translation initiation factor 5A of Saccharolobus solfataricus (strain ATCC 35092 / DSM 1617 / JCM 11322 / P2) (Sulfolobus solfataricus).